Reading from the N-terminus, the 309-residue chain is Glutaminase (309 aa).

Positions 64, 114, 160, 167, 191, 243, and 261 each coordinate substrate.

The protein belongs to the glutaminase family. As to quaternary structure, homotetramer.

It catalyses the reaction L-glutamine + H2O = L-glutamate + NH4(+). This Agrobacterium fabrum (strain C58 / ATCC 33970) (Agrobacterium tumefaciens (strain C58)) protein is Glutaminase.